Here is a 198-residue protein sequence, read N- to C-terminus: Holliday junction branch migration complex subunit RuvA (198 aa).

Residues 1-63 (MYDYIKGQLT…EDAHLLFGFH (63 aa)) are domain I. The tract at residues 64 to 142 (TEDEKDVFLK…EAPQETGHTK (79 aa)) is domain II. Residues 143 to 147 (ARSNK) form a flexible linker region. The segment at 148–198 (AGNTQLDEAIEALLALGYKAKELKKIRAFFEGTSETAEQYIKSALKLLMKG) is domain III.

The protein belongs to the RuvA family. As to quaternary structure, homotetramer. Forms an RuvA(8)-RuvB(12)-Holliday junction (HJ) complex. HJ DNA is sandwiched between 2 RuvA tetramers; dsDNA enters through RuvA and exits via RuvB. An RuvB hexamer assembles on each DNA strand where it exits the tetramer. Each RuvB hexamer is contacted by two RuvA subunits (via domain III) on 2 adjacent RuvB subunits; this complex drives branch migration. In the full resolvosome a probable DNA-RuvA(4)-RuvB(12)-RuvC(2) complex forms which resolves the HJ.

The protein resides in the cytoplasm. Functionally, the RuvA-RuvB-RuvC complex processes Holliday junction (HJ) DNA during genetic recombination and DNA repair, while the RuvA-RuvB complex plays an important role in the rescue of blocked DNA replication forks via replication fork reversal (RFR). RuvA specifically binds to HJ cruciform DNA, conferring on it an open structure. The RuvB hexamer acts as an ATP-dependent pump, pulling dsDNA into and through the RuvAB complex. HJ branch migration allows RuvC to scan DNA until it finds its consensus sequence, where it cleaves and resolves the cruciform DNA. This Streptococcus pyogenes serotype M1 protein is Holliday junction branch migration complex subunit RuvA.